We begin with the raw amino-acid sequence, 481 residues long: Glycosyl hydrolase family 109 protein 1 (481 aa).

The tat-type signal signal peptide spans 1-29 (MDNSSSRRRFLQTLGLATGALAAGSFANA). Residues 84–85 (ER), Asp-106, 155–158 (WEWH), 175–176 (EV), and Asn-204 contribute to the NAD(+) site. Residues Tyr-233, Arg-252, 264-267 (YPTH), and Tyr-347 contribute to the substrate site. Tyr-264 serves as a coordination point for NAD(+).

It belongs to the Gfo/Idh/MocA family. Glycosyl hydrolase 109 subfamily. It depends on NAD(+) as a cofactor. Post-translationally, predicted to be exported by the Tat system. The position of the signal peptide cleavage has not been experimentally proven.

In terms of biological role, glycosidase. This is Glycosyl hydrolase family 109 protein 1 from Akkermansia muciniphila (strain ATCC BAA-835 / DSM 22959 / JCM 33894 / BCRC 81048 / CCUG 64013 / CIP 107961 / Muc).